A 574-amino-acid chain; its full sequence is Septation ring formation regulator EzrA (574 aa).

The Extracellular segment spans residues 1–7; sequence MPTGTII. The helical transmembrane segment at 8–26 threads the bilayer; that stretch reads LIVSIVIILIIAYVACLIV. The Cytoplasmic portion of the chain corresponds to 27–574; that stretch reads RKRNDNLLVA…YEKTREAIRY (548 aa). Positions 105–189 form a coiled coil; it reads SAKNAIDSID…IEVEFSEFVM (85 aa).

The protein belongs to the EzrA family.

The protein localises to the cell membrane. Its function is as follows. Negative regulator of FtsZ ring formation; modulates the frequency and position of FtsZ ring formation. Inhibits FtsZ ring formation at polar sites. Interacts either with FtsZ or with one of its binding partners to promote depolymerization. In Streptococcus suis (strain 98HAH33), this protein is Septation ring formation regulator EzrA.